We begin with the raw amino-acid sequence, 232 residues long: Ribonuclease 3 (232 aa).

One can recognise an RNase III domain in the interval 5–134 (KKALLEQFDL…FLGALLLDKG (130 aa)). Glu47 contacts Mg(2+). The active site involves Asp51. Residues Asp120 and Glu123 each contribute to the Mg(2+) site. Glu123 is an active-site residue. The 70-residue stretch at 160–229 (DYKTKLQELL…AKNAFEKESS (70 aa)) folds into the DRBM domain. A disordered region spans residues 203-232 (KSGQGQGRSKKLAEQEAAKNAFEKESSSCF). The span at 213-232 (KLAEQEAAKNAFEKESSSCF) shows a compositional bias: basic and acidic residues.

It belongs to the ribonuclease III family. In terms of assembly, homodimer. Mg(2+) serves as cofactor.

The protein localises to the cytoplasm. It carries out the reaction Endonucleolytic cleavage to 5'-phosphomonoester.. Functionally, digests double-stranded RNA. Involved in the processing of primary rRNA transcript to yield the immediate precursors to the large and small rRNAs (23S and 16S). Processes some mRNAs, and tRNAs when they are encoded in the rRNA operon. Processes pre-crRNA and tracrRNA of type II CRISPR loci if present in the organism. The protein is Ribonuclease 3 of Streptococcus sanguinis (strain SK36).